A 285-amino-acid polypeptide reads, in one-letter code: Polyamine aminopropyltransferase (285 aa).

One can recognise a PABS domain in the interval 5-241 (DTWFTEHFQT…GWWSVTLSSK (237 aa)). Gln-35 is a binding site for S-methyl-5'-thioadenosine. Positions 66 and 90 each coordinate spermidine. S-methyl-5'-thioadenosine-binding positions include Asp-110 and 141–142 (DG). Asp-160 acts as the Proton acceptor in catalysis. 160–163 (DSTD) serves as a coordination point for spermidine. S-methyl-5'-thioadenosine is bound at residue Pro-167.

This sequence belongs to the spermidine/spermine synthase family. As to quaternary structure, homodimer or homotetramer.

It is found in the cytoplasm. It carries out the reaction S-adenosyl 3-(methylsulfanyl)propylamine + putrescine = S-methyl-5'-thioadenosine + spermidine + H(+). It participates in amine and polyamine biosynthesis; spermidine biosynthesis; spermidine from putrescine: step 1/1. In terms of biological role, catalyzes the irreversible transfer of a propylamine group from the amino donor S-adenosylmethioninamine (decarboxy-AdoMet) to putrescine (1,4-diaminobutane) to yield spermidine. The polypeptide is Polyamine aminopropyltransferase (Xylella fastidiosa (strain Temecula1 / ATCC 700964)).